Here is a 103-residue protein sequence, read N- to C-terminus: Large ribosomal subunit protein bL21 (103 aa).

This sequence belongs to the bacterial ribosomal protein bL21 family. As to quaternary structure, part of the 50S ribosomal subunit. Contacts protein L20.

Its function is as follows. This protein binds to 23S rRNA in the presence of protein L20. This chain is Large ribosomal subunit protein bL21, found in Clostridium botulinum (strain Alaska E43 / Type E3).